The chain runs to 253 residues: DNA polymerase sliding clamp 2 (253 aa).

The protein belongs to the PCNA family. Homotrimer. The subunits circularize to form a toroid; DNA passes through its center. Replication factor C (RFC) is required to load the toroid on the DNA. Interacts with TIP.

With respect to regulation, inhibited by interaction with the PCNA inhibitor TIP. In terms of biological role, sliding clamp subunit that acts as a moving platform for DNA processing. Responsible for tethering the catalytic subunit of DNA polymerase and other proteins to DNA during high-speed replication. The chain is DNA polymerase sliding clamp 2 from Thermococcus kodakarensis (strain ATCC BAA-918 / JCM 12380 / KOD1) (Pyrococcus kodakaraensis (strain KOD1)).